Reading from the N-terminus, the 89-residue chain is Small ribosomal subunit protein uS14 (89 aa).

The protein belongs to the universal ribosomal protein uS14 family. As to quaternary structure, part of the 30S ribosomal subunit. Contacts proteins S3 and S10.

In terms of biological role, binds 16S rRNA, required for the assembly of 30S particles and may also be responsible for determining the conformation of the 16S rRNA at the A site. The chain is Small ribosomal subunit protein uS14 from Oenococcus oeni (strain ATCC BAA-331 / PSU-1).